The chain runs to 4134 residues: DNA-dependent protein kinase catalytic subunit (4134 aa).

HEAT repeat units lie at residues 900-937, 1000-1036, and 1050-1085; these read VIYL…VAYM, QDTV…LKWS, and ANTK…YREF. TPR repeat units follow at residues 1265 to 1305 and 1722 to 1755; these read YNTF…HDIH and PMSS…SQSP. Serine 2055 is modified (phosphoserine; by autocatalysis). A TPR 3 repeat occupies 2207–2240; sequence DEILANRLLEFLMKNAFHQKRAVFRHNLEIIKTV. Threonine 2609 carries the post-translational modification Phosphothreonine; by autocatalysis. A compositionally biased stretch (polar residues) spans 2611–2629; sequence ASQSTNRNSSQERSLSISG. Residues 2611–2631 form a disordered region; that stretch reads ASQSTNRNSSQERSLSISGSV. Serine 2612 carries the phosphoserine; by autocatalysis modification. Threonine 2638 and threonine 2647 each carry phosphothreonine; by autocatalysis. The FAT domain maps to 2880–3545; sequence NVSTSCLASL…IYPFTISSES (666 aa). The PI3K/PI4K catalytic domain occupies 3728–4059; it reads FDERIMVLES…VSYVKRKLTG (332 aa). The G-loop stretch occupies residues 3734–3740; it reads VLESLRK. The segment at 3925-3933 is catalytic loop; the sequence is GIGDRHLSN. Residues 3945–3970 form an activation loop region; it reads GIDFGHAFGSATQFLPVPELMPFRLT. An FATC domain is found at 4102–4134; it reads DRLSEETQVRCLIDQATDPNLLGRVWEGWEPWM.

It belongs to the PI3/PI4-kinase family. As to quaternary structure, DNA-PK is a heterotrimer of PRKDC and the Ku dimer (composed of XRCC6/Ku70 and XRCC5/Ku86). Component of the core long-range non-homologous end joining (NHEJ) complex (also named DNA-PK complex) composed of PRKDC, LIG4, XRCC4, XRCC6/Ku70, XRCC5/Ku86 and NHEJ1/XLF. Additional component of the NHEJ complex includes PAXX. Following autophosphorylation, PRKDC dissociates from DNA. In terms of processing, autophosphorylated at two clusters, the T2609 cluster and the S2056 cluster. Autophosphorylated on Ser-2055, Thr-2609, Thr-2638 and Thr-2647. Ser-2055 and Thr-2609 are DNA damage-inducible phosphorylation sites (inducible with ionizing radiation, IR) dephosphorylated by PPP5C. Autophosphorylation induces a conformational change that leads to remodeling of the DNA-PK complex, requisite for efficient end processing and DNA repair. Autophosphorylation in trans within DNA-PK complexes loaded on DNA ends leads to the dissociation of PRKDC from DNA and the transition into the short-range NHEJ complex. Autophosphorylation of the T2609 cluster is required for hematopoietic development and protein synthesis in erythrocytes precursors.

The protein resides in the nucleus. Its subcellular location is the nucleolus. The enzyme catalyses L-seryl-[protein] + ATP = O-phospho-L-seryl-[protein] + ADP + H(+). The catalysed reaction is L-threonyl-[protein] + ATP = O-phospho-L-threonyl-[protein] + ADP + H(+). Its function is as follows. Serine/threonine-protein kinase that acts as a molecular sensor for DNA damage. Involved in DNA nonhomologous end joining (NHEJ) required for double-strand break (DSB) repair and V(D)J recombination. Must be bound to DNA to express its catalytic properties. Promotes processing of hairpin DNA structures in V(D)J recombination by activation of the hairpin endonuclease artemis (DCLRE1C). Recruited by XRCC5 and XRCC6 to DNA ends and is required to (1) protect and align broken ends of DNA, thereby preventing their degradation, (2) and sequester the DSB for repair by NHEJ. Acts as a scaffold protein to aid the localization of DNA repair proteins to the site of damage. The assembly of the DNA-PK complex at DNA ends is also required for the NHEJ ligation step. Found at the ends of chromosomes, suggesting a further role in the maintenance of telomeric stability and the prevention of chromosomal end fusion. As part of the DNA-PK complex, involved in the early steps of ribosome assembly by promoting the processing of precursor rRNA into mature 18S rRNA in the small-subunit processome. Recognizes the substrate consensus sequence [ST]-Q. Phosphorylates 'Ser-139' of histone variant H2AX, thereby regulating DNA damage response mechanism. This Gallus gallus (Chicken) protein is DNA-dependent protein kinase catalytic subunit (PRKDC).